A 435-amino-acid chain; its full sequence is N-lysine methyltransferase SMYD2-A (435 aa).

Residues 7–241 form the SET domain; it reads EGTERFLSPG…PEEEIFNSYI (235 aa). Residue 17–19 coordinates S-adenosyl-L-methionine; the sequence is KGR. Cys52, Cys55, Cys65, Cys68, Cys74, Cys78, His86, and Cys90 together coordinate Zn(2+). The segment at 52 to 90 adopts an MYND-type zinc-finger fold; it reads CECCFTRKEGLSKCGKCKQAYYCNVECQRGDWPMHKLEC. S-adenosyl-L-methionine contacts are provided by residues His137, 206–207, and 258–260; these read NH and YFF.

This sequence belongs to the class V-like SAM-binding methyltransferase superfamily.

It localises to the cytoplasm. The protein resides in the cytosol. It is found in the nucleus. The enzyme catalyses L-lysyl(4)-[histone H3] + 3 S-adenosyl-L-methionine = N(6),N(6),N(6)-trimethyl-L-lysyl(4)-[histone H3] + 3 S-adenosyl-L-homocysteine + 3 H(+). It catalyses the reaction L-lysyl-[protein] + S-adenosyl-L-methionine = N(6)-methyl-L-lysyl-[protein] + S-adenosyl-L-homocysteine + H(+). Its function is as follows. Protein-lysine N-methyltransferase that methylates both histones and non-histone proteins, including p53/TP53 and RB1. Specifically trimethylates histone H3 'Lys-4' (H3K4me3) in vivo. The activity requires interaction with HSP90alpha. Shows even higher methyltransferase activity on p53/TP53. Monomethylates 'Lys-370' of p53/TP53, leading to decreased DNA-binding activity and subsequent transcriptional regulation activity of p53/TP53. Monomethylates RB1 at 'Lys-860'. The protein is N-lysine methyltransferase SMYD2-A (smyd2a) of Danio rerio (Zebrafish).